The following is a 160-amino-acid chain: Deoxyuridine 5'-triphosphate nucleotidohydrolase (160 aa).

Substrate contacts are provided by residues 76 to 78, Asn89, and 93 to 95; these read RSG and TID. The segment covering 139-149 has biased composition (basic and acidic residues); sequence HTLSDTERGED. Residues 139 to 160 are disordered; it reads HTLSDTERGEDGFGSTGHGSHQ. Positions 150-160 are enriched in gly residues; it reads GFGSTGHGSHQ.

The protein belongs to the dUTPase family. It depends on Mg(2+) as a cofactor.

It catalyses the reaction dUTP + H2O = dUMP + diphosphate + H(+). It functions in the pathway pyrimidine metabolism; dUMP biosynthesis; dUMP from dCTP (dUTP route): step 2/2. In terms of biological role, this enzyme is involved in nucleotide metabolism: it produces dUMP, the immediate precursor of thymidine nucleotides and it decreases the intracellular concentration of dUTP so that uracil cannot be incorporated into DNA. In Beijerinckia indica subsp. indica (strain ATCC 9039 / DSM 1715 / NCIMB 8712), this protein is Deoxyuridine 5'-triphosphate nucleotidohydrolase.